A 236-amino-acid polypeptide reads, in one-letter code: Phosphoribosylaminoimidazole-succinocarboxamide synthase (236 aa).

It belongs to the SAICAR synthetase family.

It catalyses the reaction 5-amino-1-(5-phospho-D-ribosyl)imidazole-4-carboxylate + L-aspartate + ATP = (2S)-2-[5-amino-1-(5-phospho-beta-D-ribosyl)imidazole-4-carboxamido]succinate + ADP + phosphate + 2 H(+). Its pathway is purine metabolism; IMP biosynthesis via de novo pathway; 5-amino-1-(5-phospho-D-ribosyl)imidazole-4-carboxamide from 5-amino-1-(5-phospho-D-ribosyl)imidazole-4-carboxylate: step 1/2. The polypeptide is Phosphoribosylaminoimidazole-succinocarboxamide synthase (Pseudomonas putida (strain W619)).